The primary structure comprises 164 residues: Large ribosomal subunit protein uL10 (164 aa).

This sequence belongs to the universal ribosomal protein uL10 family. As to quaternary structure, part of the ribosomal stalk of the 50S ribosomal subunit. The N-terminus interacts with L11 and the large rRNA to form the base of the stalk. The C-terminus forms an elongated spine to which L12 dimers bind in a sequential fashion forming a multimeric L10(L12)X complex.

Its function is as follows. Forms part of the ribosomal stalk, playing a central role in the interaction of the ribosome with GTP-bound translation factors. The chain is Large ribosomal subunit protein uL10 from Helicobacter pylori (strain G27).